A 244-amino-acid polypeptide reads, in one-letter code: Tetraspanin-7 (244 aa).

The Cytoplasmic segment spans residues 1 to 11 (METKPVITCLK). The helical transmembrane segment at 12-35 (TLLIIYSFVFWITGVILLAVGVWG) threads the bilayer. Over 36–51 (KLTLGTYISLIAENST) the chain is Extracellular. N49 carries N-linked (GlcNAc...) asparagine glycosylation. The chain crosses the membrane as a helical span at residues 52–70 (NAPYVLIGTGTTIVVFGLF). Over 71-81 (GCFATCRGSPW) the chain is Cytoplasmic. A helical transmembrane segment spans residues 82–107 (MLKLYAMFLSLVFLAELVAGISGFVF). At 108–208 (RHEIKDTFLR…LVTSFMETNM (101 aa)) the chain is on the extracellular side. 4 N-linked (GlcNAc...) asparagine glycosylation sites follow: N150, N153, N172, and N183. Residues 209–229 (GIIAGVAFGIAFSQLIGMLLA) form a helical membrane-spanning segment. The Cytoplasmic segment spans residues 230–244 (CCLSRFITANQYEMV).

The protein belongs to the tetraspanin (TM4SF) family.

The protein resides in the membrane. May be involved in cell proliferation and cell motility. The sequence is that of Tetraspanin-7 (TSPAN7) from Pongo pygmaeus (Bornean orangutan).